A 400-amino-acid chain; its full sequence is Elongation factor Tu 2 (400 aa).

In terms of domain architecture, tr-type G spans Lys-10–Gln-209. The segment at Gly-19 to Thr-26 is G1. Gly-19 to Thr-26 is a binding site for GTP. Residue Thr-26 coordinates Mg(2+). Residues Gly-60–Asn-64 form a G2 region. The G3 stretch occupies residues Asp-81–Gly-84. GTP contacts are provided by residues Asp-81–His-85 and Asn-136–Asp-139. Positions Asn-136–Asp-139 are G4. The segment at Ser-174–Leu-176 is G5.

This sequence belongs to the TRAFAC class translation factor GTPase superfamily. Classic translation factor GTPase family. EF-Tu/EF-1A subfamily. Monomer.

The protein localises to the cytoplasm. The catalysed reaction is GTP + H2O = GDP + phosphate + H(+). Its function is as follows. GTP hydrolase that promotes the GTP-dependent binding of aminoacyl-tRNA to the A-site of ribosomes during protein biosynthesis. The polypeptide is Elongation factor Tu 2 (Syntrophomonas wolfei subsp. wolfei (strain DSM 2245B / Goettingen)).